The chain runs to 180 residues: Cytochrome b6-f complex subunit 4 (180 aa).

Transmembrane regions (helical) follow at residues 36-56 (LSYI…GLAV), 95-115 (LLGV…PFLE), and 131-151 (TVSL…ALPI).

This sequence belongs to the cytochrome b family. PetD subfamily. As to quaternary structure, the 4 large subunits of the cytochrome b6-f complex are cytochrome b6, subunit IV (17 kDa polypeptide, petD), cytochrome f and the Rieske protein, while the 4 small subunits are petG, petL, petM and petN. The complex functions as a dimer.

It is found in the plastid. The protein resides in the chloroplast thylakoid membrane. Its function is as follows. Component of the cytochrome b6-f complex, which mediates electron transfer between photosystem II (PSII) and photosystem I (PSI), cyclic electron flow around PSI, and state transitions. The sequence is that of Cytochrome b6-f complex subunit 4 from Pinus thunbergii (Japanese black pine).